Consider the following 42-residue polypeptide: Photosystem I reaction center subunit IX (42 aa).

The chain crosses the membrane as a helical span at residues 7 to 27; the sequence is YLSTAPVLAAVWFGFLAGLLI.

The protein belongs to the PsaJ family.

Its subcellular location is the plastid. The protein localises to the chloroplast thylakoid membrane. Its function is as follows. May help in the organization of the PsaE and PsaF subunits. This chain is Photosystem I reaction center subunit IX, found in Nephroselmis olivacea (Green alga).